Here is a 389-residue protein sequence, read N- to C-terminus: Pyruvate synthase subunit PorA (389 aa).

As to quaternary structure, heterotetramer of one alpha, one beta, one delta and one gamma chain.

It carries out the reaction 2 oxidized [2Fe-2S]-[ferredoxin] + pyruvate + CoA = 2 reduced [2Fe-2S]-[ferredoxin] + acetyl-CoA + CO2 + H(+). The sequence is that of Pyruvate synthase subunit PorA (porA) from Methanocaldococcus jannaschii (strain ATCC 43067 / DSM 2661 / JAL-1 / JCM 10045 / NBRC 100440) (Methanococcus jannaschii).